The sequence spans 240 residues: Uridylate kinase (240 aa).

12–15 (KLSG) is an ATP binding site. The segment at 20–25 (GEQGNG) is involved in allosteric activation by GTP. Glycine 54 serves as a coordination point for UMP. ATP-binding residues include glycine 55 and arginine 59. UMP is bound by residues aspartate 74 and 135–142 (TGNPYFST). Positions 163, 169, and 172 each coordinate ATP.

The protein belongs to the UMP kinase family. As to quaternary structure, homohexamer. Interacts with BrxC.

Its subcellular location is the cytoplasm. It carries out the reaction UMP + ATP = UDP + ADP. Its pathway is pyrimidine metabolism; CTP biosynthesis via de novo pathway; UDP from UMP (UMPK route): step 1/1. With respect to regulation, allosterically activated by GTP. Can also be activated by dGTP and 3'-anthraniloyl-2'-deoxyguanosine-5'-triphosphate (Ant-dGTP). Inhibited by UTP, 5-bromo-UTP and 5-iodo-UTP. Catalyzes the reversible phosphorylation of UMP to UDP, with ATP or dATP as the most efficient phosphate donors. Is also able to phosphorylate 5-fluoro-UMP and 6-aza-UMP. This chain is Uridylate kinase (pyrH), found in Bacillus subtilis (strain 168).